Consider the following 549-residue polypeptide: Glucose-6-phosphate isomerase (549 aa).

Glu-354 (proton donor) is an active-site residue. Residues His-385 and Lys-513 contribute to the active site.

The protein belongs to the GPI family.

It is found in the cytoplasm. The enzyme catalyses alpha-D-glucose 6-phosphate = beta-D-fructose 6-phosphate. It participates in carbohydrate biosynthesis; gluconeogenesis. It functions in the pathway carbohydrate degradation; glycolysis; D-glyceraldehyde 3-phosphate and glycerone phosphate from D-glucose: step 2/4. Its function is as follows. Catalyzes the reversible isomerization of glucose-6-phosphate to fructose-6-phosphate. In Nitrosococcus oceani (strain ATCC 19707 / BCRC 17464 / JCM 30415 / NCIMB 11848 / C-107), this protein is Glucose-6-phosphate isomerase.